Consider the following 308-residue polypeptide: Elongation factor Ts (308 aa).

The segment at 80-83 (TDFV) is involved in Mg(2+) ion dislocation from EF-Tu.

It belongs to the EF-Ts family.

It localises to the cytoplasm. Its function is as follows. Associates with the EF-Tu.GDP complex and induces the exchange of GDP to GTP. It remains bound to the aminoacyl-tRNA.EF-Tu.GTP complex up to the GTP hydrolysis stage on the ribosome. This is Elongation factor Ts from Rhizobium rhizogenes (strain K84 / ATCC BAA-868) (Agrobacterium radiobacter).